The sequence spans 476 residues: Ovarian-specific serine/threonine-protein kinase Lok (476 aa).

An FHA domain is found at 69–129 (FTAGRGEAND…NGTFVNNEKI (61 aa)). In terms of domain architecture, Protein kinase spans 174–441 (YYVNRKLGSG…IDDVLQSSWL (268 aa)). ATP is bound by residues 180–188 (LGSGAYGLV) and K203. D303 serves as the catalytic Proton acceptor.

The protein belongs to the protein kinase superfamily. CAMK Ser/Thr protein kinase family. CDS1 subfamily. In terms of tissue distribution, in stage 3 embryos, both isoforms are expressed in both somatic and pole cell nuclei. Expression in pole cell nuclei is sustained until stage 9 and weakly expressed after pole cell invagination into the abdominal cavity.

Its subcellular location is the nucleus speckle. The catalysed reaction is L-seryl-[protein] + ATP = O-phospho-L-seryl-[protein] + ADP + H(+). It carries out the reaction L-threonyl-[protein] + ATP = O-phospho-L-threonyl-[protein] + ADP + H(+). Functionally, may have a role in germline establishment. This chain is Ovarian-specific serine/threonine-protein kinase Lok (lok), found in Drosophila melanogaster (Fruit fly).